An 88-amino-acid polypeptide reads, in one-letter code: Bombyxin B-8 (88 aa).

The N-terminal stretch at 1 to 18 is a signal peptide; sequence MKTSVIFVLIVLNLMWSG. 3 disulfides stabilise this stretch: Cys-28–Cys-74, Cys-40–Cys-87, and Cys-73–Cys-78. A propeptide spans 47 to 65 (c peptide like); sequence GGAQYAPYFWQKAYLGSRG.

This sequence belongs to the insulin family. As to quaternary structure, heterodimer of a B chain and an A chain linked by two disulfide bonds.

It is found in the secreted. Brain peptide responsible for activation of prothoracic glands to produce ecdysone in insects. The polypeptide is Bombyxin B-8 (BBXB8) (Bombyx mori (Silk moth)).